A 156-amino-acid polypeptide reads, in one-letter code: Small ribosomal subunit protein uS7 (156 aa).

Belongs to the universal ribosomal protein uS7 family. In terms of assembly, part of the 30S ribosomal subunit. Contacts proteins S9 and S11.

Its function is as follows. One of the primary rRNA binding proteins, it binds directly to 16S rRNA where it nucleates assembly of the head domain of the 30S subunit. Is located at the subunit interface close to the decoding center, probably blocks exit of the E-site tRNA. The sequence is that of Small ribosomal subunit protein uS7 from Geobacillus thermodenitrificans (strain NG80-2).